The sequence spans 352 residues: Holliday junction branch migration complex subunit RuvB (352 aa).

The large ATPase domain (RuvB-L) stretch occupies residues Pro-4–Tyr-185. Residues Ile-24, Arg-25, Gly-66, Lys-69, Thr-70, Thr-71, Glu-132–Phe-134, Arg-175, Tyr-185, and Arg-222 contribute to the ATP site. Residue Thr-70 participates in Mg(2+) binding. The interval Asn-186–Asp-256 is small ATPAse domain (RuvB-S). A head domain (RuvB-H) region spans residues Glu-259–Asn-352. DNA is bound by residues Arg-295, Arg-314, and Arg-319.

The protein belongs to the RuvB family. As to quaternary structure, homohexamer. Forms an RuvA(8)-RuvB(12)-Holliday junction (HJ) complex. HJ DNA is sandwiched between 2 RuvA tetramers; dsDNA enters through RuvA and exits via RuvB. An RuvB hexamer assembles on each DNA strand where it exits the tetramer. Each RuvB hexamer is contacted by two RuvA subunits (via domain III) on 2 adjacent RuvB subunits; this complex drives branch migration. In the full resolvosome a probable DNA-RuvA(4)-RuvB(12)-RuvC(2) complex forms which resolves the HJ.

It localises to the cytoplasm. It carries out the reaction ATP + H2O = ADP + phosphate + H(+). The RuvA-RuvB-RuvC complex processes Holliday junction (HJ) DNA during genetic recombination and DNA repair, while the RuvA-RuvB complex plays an important role in the rescue of blocked DNA replication forks via replication fork reversal (RFR). RuvA specifically binds to HJ cruciform DNA, conferring on it an open structure. The RuvB hexamer acts as an ATP-dependent pump, pulling dsDNA into and through the RuvAB complex. RuvB forms 2 homohexamers on either side of HJ DNA bound by 1 or 2 RuvA tetramers; 4 subunits per hexamer contact DNA at a time. Coordinated motions by a converter formed by DNA-disengaged RuvB subunits stimulates ATP hydrolysis and nucleotide exchange. Immobilization of the converter enables RuvB to convert the ATP-contained energy into a lever motion, pulling 2 nucleotides of DNA out of the RuvA tetramer per ATP hydrolyzed, thus driving DNA branch migration. The RuvB motors rotate together with the DNA substrate, which together with the progressing nucleotide cycle form the mechanistic basis for DNA recombination by continuous HJ branch migration. Branch migration allows RuvC to scan DNA until it finds its consensus sequence, where it cleaves and resolves cruciform DNA. In Pseudomonas aeruginosa (strain LESB58), this protein is Holliday junction branch migration complex subunit RuvB.